The primary structure comprises 887 residues: ABC transporter A family member 10 (887 aa).

Helical transmembrane passes span 38 to 58 (GIQYIIVLVILHYTIPNVITL), 198 to 218 (YLYVIYLPLLFLFSLQQLLVT), 245 to 265 (IIIVQTITNVINILLVMVVLY), 277 to 297 (VMLFLQFLLYSFSMVAIGIIL), 309 to 329 (AISSFLLLILVGVSCFYQFYL), 335 to 355 (SSWLRSILFLFSPCAFGEFLY), and 376 to 396 (ISFLFLIIDIFLYFTIAWYIT). The segment covering 443-469 (NNCNNNNTSPSSSSSSQSSPLNKPLLS) has biased composition (low complexity). The disordered stretch occupies residues 443–474 (NNCNNNNTSPSSSSSSQSSPLNKPLLSGDSDD). In terms of domain architecture, ABC transporter spans 481 to 728 (IRLVNLKKTY…FNLGYILTIV (248 aa)). Residue 519–526 (GQNGSGKT) coordinates ATP. Low complexity predominate over residues 774 to 797 (NNNNNENNSNNSDGSSSSSDSSSS). Positions 774 to 799 (NNNNNENNSNNSDGSSSSSDSSSSKD) are disordered.

It belongs to the ABC transporter superfamily. ABCA family.

It is found in the membrane. The chain is ABC transporter A family member 10 (abcA10) from Dictyostelium discoideum (Social amoeba).